Reading from the N-terminus, the 371-residue chain is MESLWKLSYLLEPASLALILTAVSVAYASASRALDHGREMERNLDFSEASITLDRSQALMIPLASSCSLLLMFYLFSSVSHLVTAFTAVASAMALFFCLSPYVNCVRSRLGVGDPFVSRCCSKPFTRLQGLLVAICVGTVVAWLVSGHWLLNNLLGISICIAFVSHVRLPNIKICALLLVCLFVYDVFWVFFSERFFGANVMVSVATQKASNPVHTVANKLSLPGLQLITKKLELPVKLVFPRSLMGGLAPGSSPGDYMMLGLGDMAIPGMLLALVLSFDHRKIKDMSVSQDMPPSKQRKYVWYALTGYGVGLVTALAAGILSQSPQPALLYLVPSTLGPVMYMSWLRNELWELWEGSRPIINDKAHLLEV.

Residues 1 to 6 (MESLWK) lie on the Lumenal side of the membrane. The helical transmembrane segment at 7–27 (LSYLLEPASLALILTAVSVAY) threads the bilayer. The Cytoplasmic portion of the chain corresponds to 28-57 (ASASRALDHGREMERNLDFSEASITLDRSQ). The helical transmembrane segment at 58–75 (ALMIPLASSCSLLLMFYL) threads the bilayer. Over 76-80 (FSSVS) the chain is Lumenal. The helical transmembrane segment at 81–103 (HLVTAFTAVASAMALFFCLSPYV) threads the bilayer. At 104-123 (NCVRSRLGVGDPFVSRCCSK) the chain is on the cytoplasmic side. The chain crosses the membrane as a helical span at residues 124–146 (PFTRLQGLLVAICVGTVVAWLVS). At 147–149 (GHW) the chain is on the lumenal side. Residues 150 to 167 (LLNNLLGISICIAFVSHV) form a helical membrane-spanning segment. Topologically, residues 168-171 (RLPN) are cytoplasmic. Residues 172–192 (IKICALLLVCLFVYDVFWVFF) traverse the membrane as a helical segment. Residue Asp186 is part of the active site. The Lumenal portion of the chain corresponds to 193–258 (SERFFGANVM…LAPGSSPGDY (66 aa)). A helical transmembrane segment spans residues 259–279 (MMLGLGDMAIPGMLLALVLSF). Asp265 is a catalytic residue. At 280–301 (DHRKIKDMSVSQDMPPSKQRKY) the chain is on the cytoplasmic side. The helical transmembrane segment at 302 to 322 (VWYALTGYGVGLVTALAAGIL) threads the bilayer. The Lumenal portion of the chain corresponds to 323–326 (SQSP). The chain crosses the membrane as a helical span at residues 327-347 (QPALLYLVPSTLGPVMYMSWL). Residues 328–330 (PAL) carry the PAL motif. The Cytoplasmic portion of the chain corresponds to 348–371 (RNELWELWEGSRPIINDKAHLLEV).

It belongs to the peptidase A22B family.

It localises to the endosome membrane. Intramembrane-cleaving aspartic protease (I-CLiP) that cleaves type II membrane signal peptides in the hydrophobic plane of the membrane. This Oryza sativa subsp. japonica (Rice) protein is Signal peptide peptidase-like 1 (SPPL1).